The following is a 163-amino-acid chain: Peptide methionine sulfoxide reductase MsrA 1 (163 aa).

Residue cysteine 21 is part of the active site.

The protein belongs to the MsrA Met sulfoxide reductase family.

It catalyses the reaction L-methionyl-[protein] + [thioredoxin]-disulfide + H2O = L-methionyl-(S)-S-oxide-[protein] + [thioredoxin]-dithiol. It carries out the reaction [thioredoxin]-disulfide + L-methionine + H2O = L-methionine (S)-S-oxide + [thioredoxin]-dithiol. Functionally, has an important function as a repair enzyme for proteins that have been inactivated by oxidation. Catalyzes the reversible oxidation-reduction of methionine sulfoxide in proteins to methionine. This chain is Peptide methionine sulfoxide reductase MsrA 1 (msrA1), found in Nostoc sp. (strain PCC 7120 / SAG 25.82 / UTEX 2576).